The following is a 417-amino-acid chain: Dibenzothiophene monooxygenase (417 aa).

The interval 18–124 is helical N-terminus; the sequence is NDPVAVARGL…HLYTQIAQNN (107 aa). Residues tyrosine 96, 129-134, 159-163, arginine 282, 369-370, and histidine 391 each bind FMN; these read NASSEN, KHFCS, and AR. The tract at residues 125-233 is central beta-barrel N-terminus; the sequence is WWTGNASSEN…KVEPDEVLGA (109 aa). Residues 131 to 142 are lid loop; sequence SSENNSHVLDWK. The helical C-terminus stretch occupies residues 234-417; sequence PNAFVLAFIQ…GQYPIPGFTS (184 aa).

It belongs to the DszC flavin monooxygenase family. As to quaternary structure, homotetramer formed by a dimer of dimers; FMN binds between monomers of the homodimer.

The protein resides in the cytoplasm. The enzyme catalyses dibenzothiophene + 2 FMNH2 + 2 O2 = dibenzothiophene 5,5-dioxide + 2 FMN + 2 H2O + 2 H(+). It carries out the reaction dibenzothiophene + FMNH2 + O2 = dibenzothiophene 5-oxide + FMN + H2O + H(+). The catalysed reaction is dibenzothiophene 5-oxide + FMNH2 + O2 = dibenzothiophene 5,5-dioxide + FMN + H2O + H(+). It functions in the pathway sulfur metabolism; dibenzothiophene degradation. DBT degradation completely inhibited by Cu(2+), Mn(2+), p-chloromercuribenzoic acid, 2,2-bipyridyl, 1,10-phenanthroline, and strongly inhibited by Zn(2+), 5,5'- Dithiobis(2-nitrobenzoic acid) and 8-quinolinol. Its function is as follows. Catalyzes the first step of the '4S' desulfurization pathway that removes covalently bound sulfur from dibenzothiophene (DBT) without breaking carbon-carbon bonds. Sulfur dioxygenase which converts DBT to DBT-sulfone (DBTO2 or DBT 5,5-dioxide) in a stepwise manner. Also acts on thioxanthen-9-one and 4,6-dimethyl DBT and 2,8-dimethyl DBT. The chain is Dibenzothiophene monooxygenase from Rhodococcus erythropolis (Arthrobacter picolinophilus).